Reading from the N-terminus, the 249-residue chain is Derlin-2.2 (249 aa).

The Cytoplasmic segment spans residues 1–21; the sequence is MAQAVEEWYRQMPIITRSYLT. A helical transmembrane segment spans residues 22–42; it reads AAVVTTVGCTLEIISPYHLYL. Topologically, residues 43–96 are lumenal; it reads NPKLVVQHYEIWRLVTNFLYFRKMDLDFLFHMFFLARYCKLLEENSFRGRTADF. The chain crosses the membrane as a helical span at residues 97–117; the sequence is FYMLLFGATVLTGIVLIGGMI. Residues 118 to 122 lie on the Cytoplasmic side of the membrane; the sequence is PYISE. Residues 123–143 traverse the membrane as a helical segment; sequence TFARILFLSNSLTFMMVYVWS. Residues 144 to 152 are Lumenal-facing; the sequence is KHNPFIHMS. Residues 153–173 form a helical membrane-spanning segment; that stretch reads FLGLFTFTAAYLPWVLLGFSI. Over 174-249 the chain is Cytoplasmic; it reads LVGSSTWVDL…GAIGVDPQAQ (76 aa).

The protein belongs to the derlin family. In terms of tissue distribution, expressed in roots, stalks, leaves, immature ears, embryo and endosperm.

The protein resides in the endoplasmic reticulum membrane. Functionally, may be involved in the degradation process of specific misfolded endoplasmic reticulum (ER) luminal proteins. In Zea mays (Maize), this protein is Derlin-2.2 (DER2.2).